The sequence spans 128 residues: Small ribosomal subunit protein uS11 (128 aa).

This sequence belongs to the universal ribosomal protein uS11 family. In terms of assembly, part of the 30S ribosomal subunit. Interacts with proteins S7 and S18. Binds to IF-3.

In terms of biological role, located on the platform of the 30S subunit, it bridges several disparate RNA helices of the 16S rRNA. Forms part of the Shine-Dalgarno cleft in the 70S ribosome. The polypeptide is Small ribosomal subunit protein uS11 (Leuconostoc mesenteroides subsp. mesenteroides (strain ATCC 8293 / DSM 20343 / BCRC 11652 / CCM 1803 / JCM 6124 / NCDO 523 / NBRC 100496 / NCIMB 8023 / NCTC 12954 / NRRL B-1118 / 37Y)).